An 82-amino-acid polypeptide reads, in one-letter code: Large ribosomal subunit protein bL31B (82 aa).

This sequence belongs to the bacterial ribosomal protein bL31 family. Type B subfamily. As to quaternary structure, part of the 50S ribosomal subunit.

The polypeptide is Large ribosomal subunit protein bL31B (Bacillus velezensis (strain DSM 23117 / BGSC 10A6 / LMG 26770 / FZB42) (Bacillus amyloliquefaciens subsp. plantarum)).